The sequence spans 658 residues: Glycogen debranching enzyme (658 aa).

Residue aspartate 335 is the Nucleophile of the active site. The Proton donor role is filled by glutamate 370. Positions 457–468 (NDANGEGNRDGT) are enriched in basic and acidic residues. The segment at 457-481 (NDANGEGNRDGTDSNFSNNHGTEGL) is disordered.

This sequence belongs to the glycosyl hydrolase 13 family.

The enzyme catalyses Hydrolysis of (1-&gt;6)-alpha-D-glucosidic linkages to branches with degrees of polymerization of three or four glucose residues in limit dextrin.. Its pathway is glycan degradation; glycogen degradation. Removes maltotriose and maltotetraose chains that are attached by 1,6-alpha-linkage to the limit dextrin main chain, generating a debranched limit dextrin. The protein is Glycogen debranching enzyme of Pectobacterium atrosepticum (strain SCRI 1043 / ATCC BAA-672) (Erwinia carotovora subsp. atroseptica).